We begin with the raw amino-acid sequence, 661 residues long: Acetyl-coenzyme A synthetase (661 aa).

CoA contacts are provided by residues 197–200 (RGGK) and T320. ATP is bound by residues 396–398 (GEP), 420–425 (DTWWQT), D511, and R526. S534 lines the CoA pocket. Residue R537 participates in ATP binding. Residues V548 and V553 each contribute to the Mg(2+) site. An N6-acetyllysine modification is found at K620.

Belongs to the ATP-dependent AMP-binding enzyme family. Mg(2+) is required as a cofactor. Post-translationally, acetylated. Deacetylation by the SIR2-homolog deacetylase activates the enzyme.

The enzyme catalyses acetate + ATP + CoA = acetyl-CoA + AMP + diphosphate. Functionally, catalyzes the conversion of acetate into acetyl-CoA (AcCoA), an essential intermediate at the junction of anabolic and catabolic pathways. AcsA undergoes a two-step reaction. In the first half reaction, AcsA combines acetate with ATP to form acetyl-adenylate (AcAMP) intermediate. In the second half reaction, it can then transfer the acetyl group from AcAMP to the sulfhydryl group of CoA, forming the product AcCoA. The chain is Acetyl-coenzyme A synthetase from Leptospira interrogans serogroup Icterohaemorrhagiae serovar copenhageni (strain Fiocruz L1-130).